We begin with the raw amino-acid sequence, 499 residues long: ATP synthase subunit alpha (499 aa).

169–176 serves as a coordination point for ATP; sequence GDRGTGKT.

This sequence belongs to the ATPase alpha/beta chains family. In terms of assembly, F-type ATPases have 2 components, CF(1) - the catalytic core - and CF(0) - the membrane proton channel. CF(1) has five subunits: alpha(3), beta(3), gamma(1), delta(1), epsilon(1). CF(0) has three main subunits: a(1), b(2) and c(9-12). The alpha and beta chains form an alternating ring which encloses part of the gamma chain. CF(1) is attached to CF(0) by a central stalk formed by the gamma and epsilon chains, while a peripheral stalk is formed by the delta and b chains.

It localises to the cell inner membrane. The catalysed reaction is ATP + H2O + 4 H(+)(in) = ADP + phosphate + 5 H(+)(out). In terms of biological role, produces ATP from ADP in the presence of a proton gradient across the membrane. The alpha chain is a regulatory subunit. In Brachyspira hyodysenteriae (strain ATCC 49526 / WA1), this protein is ATP synthase subunit alpha.